A 560-amino-acid chain; its full sequence is Leiomodin-3 (560 aa).

The tract at residues 1-49 is interaction with tropomyosin alpha; sequence MSEHSRNSDQEELLDEEINEDEILANLSAEELKELQSEMEVMAPDPSLP. Residues 16 to 42 are a coiled coil; it reads EEINEDEILANLSAEELKELQSEMEVM. 2 disordered regions span residues 45–68 and 127–217; these read DPSL…NFNH and IVAN…SKLD. Positions 142–167 are enriched in acidic residues; sequence ETDEEDEEEEDDDDDDEGEDDGEESE. Residues 168 to 182 show a composition bias toward basic and acidic residues; that stretch reads ETNREEEGKAKEQIR. The span at 183 to 192 shows a compositional bias: polar residues; it reads NCENNCQQVT. Over residues 194-217 the composition is skewed to basic and acidic residues; the sequence is KAFKEQRDRPEAQEQSEKKISKLD. Residues 386-425 adopt a coiled-coil conformation; it reads VTNLLTRNQDKQRQKRQEEQKQQQLKEQKKLIAMLENGLG. 2 disordered regions span residues 437–480 and 494–530; these read PKPD…KYRT and QRKS…PPLV. The segment covering 448-458 has biased composition (pro residues); it reads QPPPPRPPNPQ. Positions 498–516 are enriched in basic and acidic residues; the sequence is RMPEAREPPEKTNLKDVIK. Residues 534–553 form the WH2 domain; it reads PRDQLLNDIRHSSVAYLKPV.

This sequence belongs to the tropomodulin family. As to quaternary structure, may interact with tropomyosin alpha (TPM1/2) N-terminus. Interacts with KLHL40; leading to stabilization. Post-translationally, ubiquitinated, leading to its degradation. Interaction with KLHL40 negatively regulates ubiquitination and degradation. In terms of tissue distribution, expressed in cardiac and at higher levels in skeletal muscles (at protein level).

Its subcellular location is the cytoplasm. It is found in the myofibril. It localises to the sarcomere. The protein resides in the m line. The protein localises to the a band. Its subcellular location is the cytoskeleton. Its function is as follows. Essential for the organization of sarcomeric actin thin filaments in skeletal muscle. Increases the rate of actin polymerization. This is Leiomodin-3 (LMOD3) from Homo sapiens (Human).